Here is a 589-residue protein sequence, read N- to C-terminus: Malto-oligosyltrehalose trehalohydrolase (589 aa).

256 to 261 (GFDAVH) serves as a coordination point for substrate. The active-site Nucleophile is the D258. E295 (proton donor) is an active-site residue. Residues 320–324 (DDFHT) and 390–395 (HDQIGN) contribute to the substrate site.

It belongs to the glycosyl hydrolase 13 family.

It localises to the cytoplasm. It carries out the reaction hydrolysis of (1-&gt;4)-alpha-D-glucosidic linkage in 4-alpha-D-[(1-&gt;4)-alpha-D-glucanosyl]n trehalose to yield trehalose and (1-&gt;4)-alpha-D-glucan.. Its pathway is glycan biosynthesis; trehalose biosynthesis. In Brevibacterium helvolum, this protein is Malto-oligosyltrehalose trehalohydrolase (treZ).